A 158-amino-acid chain; its full sequence is Protein-export protein SecB (158 aa).

Belongs to the SecB family. In terms of assembly, homotetramer, a dimer of dimers. One homotetramer interacts with 1 SecA dimer.

The protein localises to the cytoplasm. One of the proteins required for the normal export of preproteins out of the cell cytoplasm. It is a molecular chaperone that binds to a subset of precursor proteins, maintaining them in a translocation-competent state. It also specifically binds to its receptor SecA. This chain is Protein-export protein SecB, found in Rhodopseudomonas palustris (strain HaA2).